We begin with the raw amino-acid sequence, 56 residues long: Large ribosomal subunit protein bL33 (56 aa).

Belongs to the bacterial ribosomal protein bL33 family.

The chain is Large ribosomal subunit protein bL33 from Actinobacillus pleuropneumoniae serotype 5b (strain L20).